The primary structure comprises 721 residues: Photosystem I P700 chlorophyll a apoprotein A1 (721 aa).

Helical transmembrane passes span 61 to 84 (VFSA…FHGA), 147 to 170 (LYCT…FHYH), 186 to 210 (LNHH…HVSL), 282 to 300 (TAHH…GHMY), 337 to 360 (WHAQ…HHMY), 376 to 402 (LSLF…IFMV), 424 to 446 (AIVS…LYIH), and 522 to 540 (FLVH…LILL). 2 residues coordinate [4Fe-4S] cluster: Cys564 and Cys573. A run of 2 helical transmembrane segments spans residues 580–601 (HVFL…HFSW) and 655–677 (LSAY…MFLF). Position 666 (His666) interacts with chlorophyll a'. The chlorophyll a site is built by Met674 and Tyr682. Trp683 is a phylloquinone binding site. The helical transmembrane segment at 715–721 (AVGVAHY) threads the bilayer.

It belongs to the PsaA/PsaB family. In terms of assembly, the PsaA/B heterodimer binds the P700 chlorophyll special pair and subsequent electron acceptors. PSI consists of a core antenna complex that captures photons, and an electron transfer chain that converts photonic excitation into a charge separation. The eukaryotic PSI reaction center is composed of at least 11 subunits. It depends on P700 is a chlorophyll a/chlorophyll a' dimer, A0 is one or more chlorophyll a, A1 is one or both phylloquinones and FX is a shared 4Fe-4S iron-sulfur center. as a cofactor.

Its subcellular location is the plastid. It localises to the chloroplast thylakoid membrane. It catalyses the reaction reduced [plastocyanin] + hnu + oxidized [2Fe-2S]-[ferredoxin] = oxidized [plastocyanin] + reduced [2Fe-2S]-[ferredoxin]. PsaA and PsaB bind P700, the primary electron donor of photosystem I (PSI), as well as the electron acceptors A0, A1 and FX. PSI is a plastocyanin-ferredoxin oxidoreductase, converting photonic excitation into a charge separation, which transfers an electron from the donor P700 chlorophyll pair to the spectroscopically characterized acceptors A0, A1, FX, FA and FB in turn. Oxidized P700 is reduced on the lumenal side of the thylakoid membrane by plastocyanin. The chain is Photosystem I P700 chlorophyll a apoprotein A1 from Ginkgo biloba (Ginkgo).